The chain runs to 65 residues: VESP-VB2 (65 aa).

The first 23 residues, 1 to 23 (MKMSILFLFALIASLACLQLTFA), serve as a signal peptide directing secretion. AXPX repeat units follow at residues 23-26 (AAPA), 27-30 (ASPF), 31-34 (ANPG), 35-38 (ASPE), 39-42 (AAPL), 43-46 (ADPL), and 47-50 (ADPF). A propeptide spanning residues 24–49 (APAASPFANPGASPEAAPLADPLADP) is cleaved from the precursor. A Leucine amide modification is found at Leu-62.

This sequence belongs to the MCD family. Mastoparan subfamily. As to expression, expressed by the venom gland.

Its subcellular location is the secreted. In terms of biological role, antimicrobial peptide. Shows activity against both Gram-positive and -negative bacteria, as well against fungi. Also promotes important mast cell degranulation. Shows little hemolytic activity on rabbit and human erythrocytes. Its mast cell degranulation activity may be related to the activation of G-protein coupled receptors in mast cells as well as interaction with other proteins located in cell endosomal membranes in the mast cells. The sequence is that of VESP-VB2 from Vespa bicolor (Black shield wasp).